A 226-amino-acid polypeptide reads, in one-letter code: Peroxynitrite isomerase 2 (226 aa).

The short motif at 73–79 (GVWRGEG) is the GXWXGXG element. Heme b-binding residues include Lys-189 and His-216.

This sequence belongs to the nitrobindin family. In terms of assembly, homodimer. The cofactor is heme b.

It carries out the reaction peroxynitrite = nitrate. The protein operates within nitrogen metabolism. Functionally, heme-binding protein able to scavenge peroxynitrite and to protect free L-tyrosine against peroxynitrite-mediated nitration, by acting as a peroxynitrite isomerase that converts peroxynitrite to nitrate. Therefore, this protein likely plays a role in peroxynitrite sensing and in the detoxification of reactive nitrogen and oxygen species (RNS and ROS, respectively). Is able to bind nitric oxide (NO) in vitro, but may act as a sensor of peroxynitrite levels in vivo. The protein is Peroxynitrite isomerase 2 of Mycobacterium bovis (strain ATCC BAA-935 / AF2122/97).